The sequence spans 215 residues: Ras-related protein Rab-5B (215 aa).

An N-acetylthreonine modification is found at Thr2. GTP is bound by residues Ser29, Ala30, Gly32, Lys33, Ser34, Ser35, His46, Glu47, Thr52, and Gly78. Ser34 is a Mg(2+) binding site. 2 consecutive short sequence motifs (switch) follow at residues 44 to 56 and 77 to 93; these read QFHE…IGAA and AGQE…YRGA. Thr52 is a Mg(2+) binding site. Residue Ser84 is modified to Phosphoserine; by LRRK2. Asn133, Lys134, Asp136, Ala164, and Lys165 together coordinate GTP. The segment at 186–215 is disordered; that stretch reads PQNLGGAAGRSRGVDLHEQSQQNKSQCCSN. The span at 204-215 shows a compositional bias: low complexity; sequence QSQQNKSQCCSN. 2 S-geranylgeranyl cysteine lipidation sites follow: Cys212 and Cys213.

The protein belongs to the small GTPase superfamily. Rab family. As to quaternary structure, binds EEA1. Interacts with RIN2 and RIN3, which probably regulate its pathway, possibly by acting as GEFs. Interacts with GDI1, GDI2, CHML and CHM; phosphorylation at Ser-84 disrupts this interaction. It depends on Mg(2+) as a cofactor. Phosphorylation of Ser-84 in the switch II region by LRRK2 prevents the association of RAB regulatory proteins, including CHM, CHML and RAB GDP dissociation inhibitors GDI1 and GDI2. In terms of processing, (Microbial infection) Glycosylated on arginine residues by S.typhimurium protein Ssek3.

It localises to the cell membrane. Its subcellular location is the early endosome membrane. The protein localises to the melanosome. The enzyme catalyses GTP + H2O = GDP + phosphate + H(+). Its activity is regulated as follows. Regulated by guanine nucleotide exchange factors (GEFs) which promote the exchange of bound GDP for free GTP. Regulated by GTPase activating proteins (GAPs) which increase the GTP hydrolysis activity. Inhibited by GDP dissociation inhibitors (GDIs). Its function is as follows. The small GTPases Rab are key regulators of intracellular membrane trafficking, from the formation of transport vesicles to their fusion with membranes. Rabs cycle between an inactive GDP-bound form and an active GTP-bound form that is able to recruit to membranes different sets of downstream effectors directly responsible for vesicle formation, movement, tethering and fusion. This is Ras-related protein Rab-5B from Homo sapiens (Human).